A 232-amino-acid chain; its full sequence is Orotidine 5'-phosphate decarboxylase (232 aa).

Substrate contacts are provided by residues D13, K35, 62–71, T121, R182, Q191, G211, and R212; that span reads DLKFHDIPNT. Catalysis depends on K64, which acts as the Proton donor.

The protein belongs to the OMP decarboxylase family. Type 1 subfamily. Homodimer.

The catalysed reaction is orotidine 5'-phosphate + H(+) = UMP + CO2. Its pathway is pyrimidine metabolism; UMP biosynthesis via de novo pathway; UMP from orotate: step 2/2. In terms of biological role, catalyzes the decarboxylation of orotidine 5'-monophosphate (OMP) to uridine 5'-monophosphate (UMP). The chain is Orotidine 5'-phosphate decarboxylase from Acinetobacter baumannii (strain ACICU).